The following is a 513-amino-acid chain: Maturase K (513 aa).

The protein belongs to the intron maturase 2 family. MatK subfamily.

It is found in the plastid. The protein localises to the chloroplast. Usually encoded in the trnK tRNA gene intron. Probably assists in splicing its own and other chloroplast group II introns. The sequence is that of Maturase K from Danthonia spicata (Poverty oatgrass).